A 306-amino-acid polypeptide reads, in one-letter code: Natural cytotoxicity triggering receptor 1 (306 aa).

The signal sequence occupies residues 1–21 (MSSTLRALLCLGLCLSQRISA). Over 22–257 (PKQTLPKPII…WDHTAQNLLR (236 aa)) the chain is Extracellular. Ig-like domains are found at residues 42-100 (EKQA…SCIY) and 137-192 (GEKV…RCFG). 2 cysteine pairs are disulfide-bonded: Cys49-Cys98 and Cys144-Cys190. Asn216 is a glycosylation site (N-linked (GlcNAc...) asparagine). Residues 258–278 (MGLAFLVLVALVCLLVEDWLS) form a helical membrane-spanning segment. The Cytoplasmic portion of the chain corresponds to 279 to 306 (RKRTREQASRASTWEGRRRLNKHKDSEE).

Belongs to the natural cytotoxicity receptor (NCR) family. Interacts with CD3Z and FCER1G. In terms of tissue distribution, expressed in NK cells.

Its subcellular location is the cell membrane. Its function is as follows. Cytotoxicity-activating receptor that may contribute to the increased efficiency of activated natural killer (NK) cells to mediate tumor cell lysis. The sequence is that of Natural cytotoxicity triggering receptor 1 (NCR1) from Macaca fascicularis (Crab-eating macaque).